A 127-amino-acid chain; its full sequence is Cystatin cpi-1 (127 aa).

The signal sequence occupies residues 1-19 (MFFPIVWLSVLLIISKSFA). The short motif at 68 to 72 (QVVAG) is the Secondary area of contact element. A disulfide bond links C86 and C98.

This sequence belongs to the cystatin family.

Functionally, cysteine protease inhibitor which inhibits members of the peptidase C1 family. Does not inhibit asparaginyl endopeptidase. The sequence is that of Cystatin cpi-1 from Brugia malayi (Filarial nematode worm).